A 452-amino-acid chain; its full sequence is uncharacterized protein (452 aa).

The next 14 helical transmembrane spans lie at 8 to 28 (AVFLTAVASGTMLNPLNSSMI), 39 to 59 (FHLSFTTVSWLISSFYLASAV), 77 to 97 (FLFGLILVAVSAIGAPFAPTF), 100 to 122 (LLVMRLFQSVGSSAIYPSGVGLI), 134 to 156 (LAVLSIFASAMTALGPTAGGFLI), 161 to 183 (WPAIFIVNLPFIILSFLLGLYMF), 203 to 222 (LGIVLFAGGIIFLLSFLLSF), 226 to 243 (PHAVEGVLGLLLLCAFVW), 266 to 286 (AVYVQFILLNVFFYCLFFGLP), 302 to 322 (LFMLFMSGMSIVVSPLTGKWI), 330 to 350 (PIFAGALLMTAGAVLLTIFFI), 359 to 379 (LILSLLGIGYGLGNVALQAAM), 393 to 415 (GLFQTCRYLGSILSSVILGILFG), and 425 to 447 (MMGIIMIIAGGASLLMAVRFAAL).

Belongs to the major facilitator superfamily.

The protein resides in the cell membrane. This is an uncharacterized protein from Bacillus subtilis (strain 168).